The chain runs to 338 residues: uncharacterized protein (338 aa).

The disordered stretch occupies residues M1 to K72. Positions G24–S38 are enriched in polar residues. Residues A49–L58 are compositionally biased toward basic and acidic residues. The span at E59 to D68 shows a compositional bias: acidic residues.

The protein resides in the cytoplasm. Its subcellular location is the nucleus. This is an uncharacterized protein from Schizosaccharomyces pombe (strain 972 / ATCC 24843) (Fission yeast).